The sequence spans 303 residues: Ribonuclease HIII (303 aa).

Residues 85–302 (CSLIGSDEVG…TKKAYQLLKK (218 aa)) form the RNase H type-2 domain. Asp91, Glu92, and Asp196 together coordinate a divalent metal cation.

The protein belongs to the RNase HII family. RnhC subfamily. It depends on Mn(2+) as a cofactor. Requires Mg(2+) as cofactor.

It is found in the cytoplasm. The enzyme catalyses Endonucleolytic cleavage to 5'-phosphomonoester.. Endonuclease that specifically degrades the RNA of RNA-DNA hybrids. The sequence is that of Ribonuclease HIII from Streptococcus mutans serotype c (strain ATCC 700610 / UA159).